A 618-amino-acid polypeptide reads, in one-letter code: Proline--tRNA ligase (618 aa).

It belongs to the class-II aminoacyl-tRNA synthetase family. ProS type 1 subfamily. In terms of assembly, homodimer.

It is found in the cytoplasm. It carries out the reaction tRNA(Pro) + L-proline + ATP = L-prolyl-tRNA(Pro) + AMP + diphosphate. Catalyzes the attachment of proline to tRNA(Pro) in a two-step reaction: proline is first activated by ATP to form Pro-AMP and then transferred to the acceptor end of tRNA(Pro). As ProRS can inadvertently accommodate and process non-cognate amino acids such as alanine and cysteine, to avoid such errors it has two additional distinct editing activities against alanine. One activity is designated as 'pretransfer' editing and involves the tRNA(Pro)-independent hydrolysis of activated Ala-AMP. The other activity is designated 'posttransfer' editing and involves deacylation of mischarged Ala-tRNA(Pro). The misacylated Cys-tRNA(Pro) is not edited by ProRS. This chain is Proline--tRNA ligase, found in Streptococcus pyogenes serotype M1.